We begin with the raw amino-acid sequence, 155 residues long: Interleukin-2 (155 aa).

Residues 1-20 form the signal peptide; sequence MYKMQLLSCIALMLVLVANS. A glycan (O-linked (GalNAc...) threonine) is linked at Thr24. Cys79 and Cys127 are oxidised to a cystine. Asn112 carries N-linked (GlcNAc...) asparagine glycosylation.

This sequence belongs to the IL-2 family.

It is found in the secreted. Its function is as follows. Cytokine produced by activated CD4-positive helper T-cells and to a lesser extend activated CD8-positive T-cells and natural killer (NK) cells that plays pivotal roles in the immune response and tolerance. Binds to a receptor complex composed of either the high-affinity trimeric IL-2R (IL2RA/CD25, IL2RB/CD122 and IL2RG/CD132) or the low-affinity dimeric IL-2R (IL2RB and IL2RG). Interaction with the receptor leads to oligomerization and conformation changes in the IL-2R subunits resulting in downstream signaling starting with phosphorylation of JAK1 and JAK3. In turn, JAK1 and JAK3 phosphorylate the receptor to form a docking site leading to the phosphorylation of several substrates including STAT5. This process leads to activation of several pathways including STAT, phosphoinositide-3-kinase/PI3K and mitogen-activated protein kinase/MAPK pathways. Functions as a T-cell growth factor and can increase NK-cell cytolytic activity as well. Promotes strong proliferation of activated B-cells and subsequently immunoglobulin production. Plays a pivotal role in regulating the adaptive immune system by controlling the survival and proliferation of regulatory T-cells, which are required for the maintenance of immune tolerance. Moreover, participates in the differentiation and homeostasis of effector T-cell subsets, including Th1, Th2, Th17 as well as memory CD8-positive T-cells. The chain is Interleukin-2 (IL2) from Vulpes vulpes (Red fox).